A 121-amino-acid chain; its full sequence is Small ribosomal subunit protein eS24 (121 aa).

The protein belongs to the eukaryotic ribosomal protein eS24 family.

The sequence is that of Small ribosomal subunit protein eS24 from Pyrobaculum arsenaticum (strain DSM 13514 / JCM 11321 / PZ6).